The following is a 497-amino-acid chain: Probable cytosol aminopeptidase (497 aa).

Residues K265 and D270 each coordinate Mn(2+). K277 is an active-site residue. D288, D347, and E349 together coordinate Mn(2+). Residue R351 is part of the active site.

This sequence belongs to the peptidase M17 family. Requires Mn(2+) as cofactor.

Its subcellular location is the cytoplasm. The enzyme catalyses Release of an N-terminal amino acid, Xaa-|-Yaa-, in which Xaa is preferably Leu, but may be other amino acids including Pro although not Arg or Lys, and Yaa may be Pro. Amino acid amides and methyl esters are also readily hydrolyzed, but rates on arylamides are exceedingly low.. It carries out the reaction Release of an N-terminal amino acid, preferentially leucine, but not glutamic or aspartic acids.. Functionally, presumably involved in the processing and regular turnover of intracellular proteins. Catalyzes the removal of unsubstituted N-terminal amino acids from various peptides. This is Probable cytosol aminopeptidase from Geobacillus thermodenitrificans (strain NG80-2).